A 199-amino-acid chain; its full sequence is Prolactin-1 (199 aa).

3 cysteine pairs are disulfide-bonded: Cys4–Cys11, Cys58–Cys174, and Cys191–Cys199. N-linked (GlcNAc...) asparagine glycosylation occurs at Asn60.

It belongs to the somatotropin/prolactin family. Post-translationally, glycosylated.

It localises to the secreted. The polypeptide is Prolactin-1 (Alligator mississippiensis (American alligator)).